The following is an 84-amino-acid chain: ATP synthase subunit c (84 aa).

2 helical membrane passes run 9–29 (IIGA…GFAI) and 54–74 (IVAG…LLFI).

It belongs to the ATPase C chain family. F-type ATPases have 2 components, F(1) - the catalytic core - and F(0) - the membrane proton channel. F(1) has five subunits: alpha(3), beta(3), gamma(1), delta(1), epsilon(1). F(0) has three main subunits: a(1), b(2) and c(10-14). The alpha and beta chains form an alternating ring which encloses part of the gamma chain. F(1) is attached to F(0) by a central stalk formed by the gamma and epsilon chains, while a peripheral stalk is formed by the delta and b chains.

It localises to the cell inner membrane. Functionally, f(1)F(0) ATP synthase produces ATP from ADP in the presence of a proton or sodium gradient. F-type ATPases consist of two structural domains, F(1) containing the extramembraneous catalytic core and F(0) containing the membrane proton channel, linked together by a central stalk and a peripheral stalk. During catalysis, ATP synthesis in the catalytic domain of F(1) is coupled via a rotary mechanism of the central stalk subunits to proton translocation. In terms of biological role, key component of the F(0) channel; it plays a direct role in translocation across the membrane. A homomeric c-ring of between 10-14 subunits forms the central stalk rotor element with the F(1) delta and epsilon subunits. The chain is ATP synthase subunit c from Haemophilus ducreyi (strain 35000HP / ATCC 700724).